Consider the following 156-residue polypeptide: Mitochondrial translation release factor in rescue (156 aa).

The GGQ domain stretch occupies residues 44–108; the sequence is EEELEEQFVR…LREKLEVAYK (65 aa). Positions 58 to 60 match the GGQ motif; that stretch reads GGQ. Residues 100–141 are a coiled coil; the sequence is REKLEVAYKGEESELLKMKKESMQKKQDKRRKVNENIEKKRR. Basic and acidic residues-rich tracts occupy residues 114 to 125 and 132 to 156; these read LLKMKKESMQKK and VNENIEKKRRFKEMLNSKQEDDKST. Positions 114–156 are disordered; sequence LLKMKKESMQKKQDKRRKVNENIEKKRRFKEMLNSKQEDDKST.

This sequence belongs to the prokaryotic/mitochondrial release factor family. Interacts (via C-terminus) with MTRES1 (via S4 domain). Associates with mitoribosomal S39 large subunit, peptidyl tRNA and nascent chain.

Its subcellular location is the mitochondrion. Functionally, part of a mitoribosome-associated quality control pathway that prevents aberrant translation by responding to interruptions during elongation. As heterodimer with MTRES1, ejects the unfinished nascent chain and peptidyl transfer RNA (tRNA), respectively, from stalled ribosomes. Recruitment of mitoribosome biogenesis factors to these quality control intermediates suggests additional roles for MTRES1 and MTRF during mitoribosome rescue. The chain is Mitochondrial translation release factor in rescue (mtrfr) from Danio rerio (Zebrafish).